The following is a 445-amino-acid chain: Gamma-glutamyl phosphate reductase (445 aa).

This sequence belongs to the gamma-glutamyl phosphate reductase family.

The protein localises to the cytoplasm. The enzyme catalyses L-glutamate 5-semialdehyde + phosphate + NADP(+) = L-glutamyl 5-phosphate + NADPH + H(+). It participates in amino-acid biosynthesis; L-proline biosynthesis; L-glutamate 5-semialdehyde from L-glutamate: step 2/2. Functionally, catalyzes the NADPH-dependent reduction of L-glutamate 5-phosphate into L-glutamate 5-semialdehyde and phosphate. The product spontaneously undergoes cyclization to form 1-pyrroline-5-carboxylate. This chain is Gamma-glutamyl phosphate reductase, found in Synechococcus sp. (strain RCC307).